Reading from the N-terminus, the 225-residue chain is Uridylate kinase (225 aa).

9 to 10 contributes to the ATP binding site; the sequence is GS. Gly43 contacts UMP. Residues Gly44 and Arg48 each coordinate ATP. Residues Asp65 and 113–119 each bind UMP; that span reads TEPAHST. Positions 139, 145, and 148 each coordinate ATP.

Belongs to the UMP kinase family. In terms of assembly, homohexamer.

The protein localises to the cytoplasm. The enzyme catalyses UMP + ATP = UDP + ADP. It functions in the pathway pyrimidine metabolism; CTP biosynthesis via de novo pathway; UDP from UMP (UMPK route): step 1/1. Its activity is regulated as follows. Inhibited by UTP. Functionally, catalyzes the reversible phosphorylation of UMP to UDP. In Methanobrevibacter smithii (strain ATCC 35061 / DSM 861 / OCM 144 / PS), this protein is Uridylate kinase.